The following is a 539-amino-acid chain: Oviduct-specific glycoprotein (539 aa).

A signal peptide spans 1–21 (MGKLLLWVGLLLMLKHHDGAA). Residues 22 to 385 (HKLVCYFTNW…HTLNNLLVND (364 aa)) form the GH18 domain. Cys-26 and Cys-51 are joined by a disulfide. Residues 71–72 (PL), 98–101 (GGWN), Tyr-142, 211–214 (LSYD), and Trp-355 contribute to the chitin site. The N-linked (GlcNAc...) asparagine glycan is linked to Asn-402. 2 disordered regions span residues 433–480 (TETH…KPLT) and 503–539 (QKVTPPGRKAGVPEKVTIPSGKMTVTPDGRAETLERL). A compositionally biased stretch (low complexity) spans 440–457 (ATMTTTPRGETATPTRTP).

This sequence belongs to the glycosyl hydrolase 18 family. As to expression, oviduct.

It is found in the cytoplasmic vesicle. The protein localises to the secretory vesicle. Functionally, binds to oocyte zona pellucida in vivo. May play a role in the fertilization process and/or early embryonic development. This Ovis aries (Sheep) protein is Oviduct-specific glycoprotein (OVGP1).